A 325-amino-acid chain; its full sequence is Heat-inducible transcription repressor HrcA (325 aa).

Belongs to the HrcA family.

Negative regulator of class I heat shock genes (grpE-dnaK-dnaJ and groELS operons). Prevents heat-shock induction of these operons. The protein is Heat-inducible transcription repressor HrcA of Staphylococcus epidermidis (strain ATCC 35984 / DSM 28319 / BCRC 17069 / CCUG 31568 / BM 3577 / RP62A).